The primary structure comprises 618 residues: Sulfite reductase [NADPH] flavoprotein alpha-component (618 aa).

The region spanning 64–202 (VTLISASQTG…QAQQWRQQVV (139 aa)) is the Flavodoxin-like domain. FMN contacts are provided by residues 70–75 (SQTGNA), 117–120 (STQG), and 153–162 (LGDTSYEHFC). In terms of domain architecture, FAD-binding FR-type spans 253–467 (TAPLTAQLSV…IEHNDNFRLP (215 aa)). Residues Thr-341, Lys-375, 405 to 408 (RLYS), 423 to 425 (TVG), Tyr-429, and 438 to 441 (GGAS) each bind FAD. Residues 538-539 (SR), 544-548 (KIYVQ), and Asp-580 contribute to the NADP(+) site. FAD is bound at residue Tyr-618.

The protein belongs to the NADPH-dependent sulphite reductase flavoprotein subunit CysJ family. This sequence in the N-terminal section; belongs to the flavodoxin family. It in the C-terminal section; belongs to the flavoprotein pyridine nucleotide cytochrome reductase family. In terms of assembly, alpha(8)-beta(8). The alpha component is a flavoprotein, the beta component is a hemoprotein. The cofactor is FAD. FMN serves as cofactor.

The enzyme catalyses hydrogen sulfide + 3 NADP(+) + 3 H2O = sulfite + 3 NADPH + 4 H(+). Its pathway is sulfur metabolism; hydrogen sulfide biosynthesis; hydrogen sulfide from sulfite (NADPH route): step 1/1. Component of the sulfite reductase complex that catalyzes the 6-electron reduction of sulfite to sulfide. This is one of several activities required for the biosynthesis of L-cysteine from sulfate. The flavoprotein component catalyzes the electron flow from NADPH -&gt; FAD -&gt; FMN to the hemoprotein component. This is Sulfite reductase [NADPH] flavoprotein alpha-component from Yersinia pseudotuberculosis serotype I (strain IP32953).